Consider the following 420-residue polypeptide: D-tagatose-1,6-bisphosphate aldolase subunit GatZ (420 aa).

It belongs to the GatZ/KbaZ family. GatZ subfamily. As to quaternary structure, forms a complex with GatY.

It functions in the pathway carbohydrate metabolism; D-tagatose 6-phosphate degradation; D-glyceraldehyde 3-phosphate and glycerone phosphate from D-tagatose 6-phosphate: step 2/2. Functionally, component of the tagatose-1,6-bisphosphate aldolase GatYZ that is required for full activity and stability of the Y subunit. Could have a chaperone-like function for the proper and stable folding of GatY. When expressed alone, GatZ does not show any aldolase activity. Is involved in the catabolism of galactitol. This is D-tagatose-1,6-bisphosphate aldolase subunit GatZ from Escherichia coli O8 (strain IAI1).